The chain runs to 38 residues: Large ribosomal subunit protein bL36 (38 aa).

The protein belongs to the bacterial ribosomal protein bL36 family.

The sequence is that of Large ribosomal subunit protein bL36 from Gemmatimonas aurantiaca (strain DSM 14586 / JCM 11422 / NBRC 100505 / T-27).